Reading from the N-terminus, the 227-residue chain is Cytochrome c oxidase subunit 2 (227 aa).

Over 1–14 (MAHPMQLGFQDAAS) the chain is Mitochondrial intermembrane. Residues 15-45 (PIMEELLYFHDHTLMIVFMISSLVLYIISLM) form a helical membrane-spanning segment. Residues 46 to 59 (LSTELTHTSTMDAQ) lie on the Mitochondrial matrix side of the membrane. Residues 60–87 (EVETVWTILPAVILILIALPSLRILYMM) form a helical membrane-spanning segment. Residues 88-227 (DEINTPSMTL…YFEEWLLKSL (140 aa)) are Mitochondrial intermembrane-facing. Cu cation-binding residues include H161, C196, E198, C200, H204, and M207. E198 provides a ligand contact to Mg(2+). Phosphotyrosine is present on Y218.

The protein belongs to the cytochrome c oxidase subunit 2 family. Component of the cytochrome c oxidase (complex IV, CIV), a multisubunit enzyme composed of 14 subunits. The complex is composed of a catalytic core of 3 subunits MT-CO1, MT-CO2 and MT-CO3, encoded in the mitochondrial DNA, and 11 supernumerary subunits COX4I, COX5A, COX5B, COX6A, COX6B, COX6C, COX7A, COX7B, COX7C, COX8 and NDUFA4, which are encoded in the nuclear genome. The complex exists as a monomer or a dimer and forms supercomplexes (SCs) in the inner mitochondrial membrane with NADH-ubiquinone oxidoreductase (complex I, CI) and ubiquinol-cytochrome c oxidoreductase (cytochrome b-c1 complex, complex III, CIII), resulting in different assemblies (supercomplex SCI(1)III(2)IV(1) and megacomplex MCI(2)III(2)IV(2)). Found in a complex with TMEM177, COA6, COX18, COX20, SCO1 and SCO2. Interacts with TMEM177 in a COX20-dependent manner. Interacts with COX20. Interacts with COX16. Requires Cu cation as cofactor.

It is found in the mitochondrion inner membrane. It carries out the reaction 4 Fe(II)-[cytochrome c] + O2 + 8 H(+)(in) = 4 Fe(III)-[cytochrome c] + 2 H2O + 4 H(+)(out). Component of the cytochrome c oxidase, the last enzyme in the mitochondrial electron transport chain which drives oxidative phosphorylation. The respiratory chain contains 3 multisubunit complexes succinate dehydrogenase (complex II, CII), ubiquinol-cytochrome c oxidoreductase (cytochrome b-c1 complex, complex III, CIII) and cytochrome c oxidase (complex IV, CIV), that cooperate to transfer electrons derived from NADH and succinate to molecular oxygen, creating an electrochemical gradient over the inner membrane that drives transmembrane transport and the ATP synthase. Cytochrome c oxidase is the component of the respiratory chain that catalyzes the reduction of oxygen to water. Electrons originating from reduced cytochrome c in the intermembrane space (IMS) are transferred via the dinuclear copper A center (CU(A)) of subunit 2 and heme A of subunit 1 to the active site in subunit 1, a binuclear center (BNC) formed by heme A3 and copper B (CU(B)). The BNC reduces molecular oxygen to 2 water molecules using 4 electrons from cytochrome c in the IMS and 4 protons from the mitochondrial matrix. This Nycticebus coucang (Slow loris) protein is Cytochrome c oxidase subunit 2 (MT-CO2).